A 300-amino-acid polypeptide reads, in one-letter code: 4-hydroxy-tetrahydrodipicolinate synthase (300 aa).

Threonine 55 contacts pyruvate. The active-site Proton donor/acceptor is tyrosine 143. The active-site Schiff-base intermediate with substrate is the lysine 171. Residue isoleucine 211 coordinates pyruvate.

The protein belongs to the DapA family. Homotetramer; dimer of dimers.

It localises to the cytoplasm. The enzyme catalyses L-aspartate 4-semialdehyde + pyruvate = (2S,4S)-4-hydroxy-2,3,4,5-tetrahydrodipicolinate + H2O + H(+). It participates in amino-acid biosynthesis; L-lysine biosynthesis via DAP pathway; (S)-tetrahydrodipicolinate from L-aspartate: step 3/4. Catalyzes the condensation of (S)-aspartate-beta-semialdehyde [(S)-ASA] and pyruvate to 4-hydroxy-tetrahydrodipicolinate (HTPA). This chain is 4-hydroxy-tetrahydrodipicolinate synthase, found in Mycobacterium leprae (strain Br4923).